Here is a 189-residue protein sequence, read N- to C-terminus: MVWLLAILAYLLGSLSFAVLLSRWFGTQDPRASGSGNPGATNMLRVAGKKLAILTLLGDVGKGLLPVLVARWLGLGVMEEAWVGIAAVIGHLYPLYFNFRGGKGVATAAGMLLGLYPPAVLLAAAAWLLTFKLSRTSSLASLVATPLTLPLLAWQQPGALLPMTVLTALIVWRHRANLRDLFAGRERHF.

The next 5 membrane-spanning stretches (helical) occupy residues 1–21 (MVWLLAILAYLLGSLSFAVLL), 50–70 (KLAILTLLGDVGKGLLPVLVA), 72–92 (WLGLGVMEEAWVGIAAVIGHL), 111–131 (MLLGLYPPAVLLAAAAWLLTF), and 151–171 (LLAWQQPGALLPMTVLTALIV).

It belongs to the PlsY family. In terms of assembly, probably interacts with PlsX.

It is found in the cell inner membrane. It catalyses the reaction an acyl phosphate + sn-glycerol 3-phosphate = a 1-acyl-sn-glycero-3-phosphate + phosphate. It participates in lipid metabolism; phospholipid metabolism. Its function is as follows. Catalyzes the transfer of an acyl group from acyl-phosphate (acyl-PO(4)) to glycerol-3-phosphate (G3P) to form lysophosphatidic acid (LPA). This enzyme utilizes acyl-phosphate as fatty acyl donor, but not acyl-CoA or acyl-ACP. In Pseudomonas paraeruginosa (strain DSM 24068 / PA7) (Pseudomonas aeruginosa (strain PA7)), this protein is Glycerol-3-phosphate acyltransferase.